The following is a 71-amino-acid chain: Transcription modulator YdgT (71 aa).

The protein belongs to the Hha/YmoA/Cnu family. In terms of assembly, forms complexes with both H-NS and StpA.

Binds to H-NS and modified the range of genes it silences; H-NS alonge silences core gene while the H-NS-Hha complex (and presumably also H-NS-YdgT) silences genes acquired by horizontal gene transfer. Plays a role silencing virulence factors in the absence of factors that induce pathogenicity. The complex formed with H-NS binds to the specific 26-bp cnb site in the origin of replication oriC. The chain is Transcription modulator YdgT (ydgT) from Salmonella choleraesuis (strain SC-B67).